Reading from the N-terminus, the 214-residue chain is Adenylate kinase (214 aa).

10-15 (GAGKGT) lines the ATP pocket. Residues 30–59 (STGDMLRAAVKAGTPLGLEAKKVMDAGQLV) are NMP. Residues T31, R36, 57 to 59 (QLV), 85 to 88 (GFPR), and Q92 contribute to the AMP site. The LID stretch occupies residues 122–159 (GRRVHPGSGRVYHIVYNPPKVEGKDDVTGEDLAIRPDD). ATP is bound by residues R123 and 132–133 (VY). AMP-binding residues include R156 and R167. Q200 contacts ATP.

It belongs to the adenylate kinase family. Monomer.

Its subcellular location is the cytoplasm. It catalyses the reaction AMP + ATP = 2 ADP. Its pathway is purine metabolism; AMP biosynthesis via salvage pathway; AMP from ADP: step 1/1. Catalyzes the reversible transfer of the terminal phosphate group between ATP and AMP. Plays an important role in cellular energy homeostasis and in adenine nucleotide metabolism. The protein is Adenylate kinase of Shewanella loihica (strain ATCC BAA-1088 / PV-4).